We begin with the raw amino-acid sequence, 678 residues long: Ribonuclease Z 2, mitochondrial (678 aa).

The N-terminal 37 residues, 1–37, are a transit peptide targeting the mitochondrion; it reads MKASLLVPRRALLFGQLLPPKYSWYSVKRWQSQLTFR.

This sequence belongs to the RNase Z family. Zn(2+) is required as a cofactor.

Its subcellular location is the mitochondrion. The protein resides in the cytoplasm. The catalysed reaction is Endonucleolytic cleavage of RNA, removing extra 3' nucleotides from tRNA precursor, generating 3' termini of tRNAs. A 3'-hydroxy group is left at the tRNA terminus and a 5'-phosphoryl group is left at the trailer molecule.. Zinc phosphodiesterase, which displays some tRNA 3'-processing endonuclease activity. May be involved in tRNA maturation, by removing a 3'-trailer from precursor tRNA. This Schizosaccharomyces pombe (strain 972 / ATCC 24843) (Fission yeast) protein is Ribonuclease Z 2, mitochondrial (trz2).